A 308-amino-acid polypeptide reads, in one-letter code: MKLLLILILIINNYNLCLSYECNSNRTYGLKGSSCEINADCLFPEVCFNSVCSKIRTTGESCTKKTDCTLTYDFGDCVNGKCEIIIATGDRCNPKVTSQKCSSSSECKNGICQLISACNSYNCPLNQYCDDKTKQCKPIPNDINSIVCKANSQCPTSHICTSSNKCIIKYSSKVGEKCTDSPLQCRVFNGEICNQETQKCIKNDQYFKQCEDESTCNGGLCVCLDDVNSKSVCVGPNGELNNEKCVNLEQKLEQCLINEKCNTLSPITCKCFKQFECFQYECNSVERFYNYKSNYYQSLNCSRFLTKP.

Positions 1-19 (MKLLLILILIINNYNLCLS) are cleaved as a signal peptide. 2 N-linked (GlcNAc...) asparagine glycosylation sites follow: Asn25 and Asn300.

The protein resides in the secreted. This is an uncharacterized protein from Dictyostelium discoideum (Social amoeba).